The following is a 1490-amino-acid chain: Leucine-rich repeat-containing protein 7 (1490 aa).

17 LRR repeats span residues 23–44, 47–68, 70–91, 93–114, 116–137, 139–161, 162–183, 185–206, 208–229, 231–253, 254–275, 277–298, 300–321, 323–344, 346–367, 369–391, and 392–413; these read IISV…VFNF, TLEE…LFNC, ALRK…IASL, NLKE…IKCC, CLTI…FTQL, NLTQ…GRLV, KLRI…MHKL, QLER…LDQI, NLRE…IGKL, MLVY…SGCE, ALED…IGLL, KLTT…IGNL, LLEE…IGYL, SLRT…IGSC, NVTV…IGQM, RLRV…TKLK, and ELAA…QTEA. A phosphoserine mark is found at Ser439, Ser441, and Ser443. Basic and acidic residues predominate over residues 663 to 676; sequence KKESTDESEVDKTH. Disordered stretches follow at residues 663-704, 785-807, and 822-899; these read KKES…NTRM, AGEN…AHGR, and ELEQ…YHDP. Positions 677–686 are enriched in polar residues; sequence CLNNSVSSGT. Residues 687–700 show a composition bias toward low complexity; sequence YSDYSPSQASSASS. At Thr831 the chain carries Phosphothreonine. Residue Ser850 is modified to Phosphoserine. A compositionally biased stretch (low complexity) spans 859-871; the sequence is PSKLETTPTTSPL. At Thr865 the chain carries Phosphothreonine. Ser869 carries the phosphoserine modification. Residues 872-882 show a composition bias toward basic and acidic residues; it reads PERKDHMKEPT. 3 positions are modified to phosphoserine: Ser947, Ser949, and Ser1118. Over residues 1134–1144 the composition is skewed to basic and acidic residues; it reads PHELPPGDRYG. 2 disordered regions span residues 1134 to 1158 and 1196 to 1218; these read PHEL…QSSI and QRRP…TRPV. At Arg1149 the chain carries Omega-N-methylarginine. Residues 1196–1217 show a composition bias toward polar residues; the sequence is QRRPLSARSYSTESYGASQTRP. At Ser1233 the chain carries Phosphoserine. 2 disordered regions span residues 1238-1265 and 1282-1312; these read GNYG…SCGK and RLDR…PYPL. Basic and acidic residues predominate over residues 1243 to 1263; it reads KTSDNSDIKTRPTPVKGEESC. The segment covering 1286–1307 has biased composition (polar residues); the sequence is TPSQQSNILDNGQEDVSPSGQW. 2 positions are modified to phosphoserine: Ser1288 and Ser1392. The PDZ domain occupies 1398–1488; it reads EQFCVRIEKN…TVDLVIQREL (91 aa).

The protein belongs to the LAP (LRR and PDZ) protein family. As to quaternary structure, interacts with CNKSR2 and DLG4. Interacts with CTNND2/Catenin delta-2. Forms a complex with N-cadherin through CTNND2. Interacts with CAMK2A. As to expression, expressed in brain (at protein level).

The protein resides in the cytoplasm. It is found in the postsynaptic density. Required for normal synaptic spine architecture and function. Necessary for DISC1 and GRM5 localization to postsynaptic density complexes and for both N-methyl D-aspartate receptor-dependent and metabotropic glutamate receptor-dependent long term depression. This is Leucine-rich repeat-containing protein 7 (Lrrc7) from Mus musculus (Mouse).